The sequence spans 180 residues: Crossover junction endodeoxyribonuclease RuvC (180 aa).

Active-site residues include D7, E66, and D138. Residues D7, E66, and D138 each coordinate Mg(2+).

This sequence belongs to the RuvC family. As to quaternary structure, homodimer which binds Holliday junction (HJ) DNA. The HJ becomes 2-fold symmetrical on binding to RuvC with unstacked arms; it has a different conformation from HJ DNA in complex with RuvA. In the full resolvosome a probable DNA-RuvA(4)-RuvB(12)-RuvC(2) complex forms which resolves the HJ. Requires Mg(2+) as cofactor.

The protein localises to the cytoplasm. The catalysed reaction is Endonucleolytic cleavage at a junction such as a reciprocal single-stranded crossover between two homologous DNA duplexes (Holliday junction).. Functionally, the RuvA-RuvB-RuvC complex processes Holliday junction (HJ) DNA during genetic recombination and DNA repair. Endonuclease that resolves HJ intermediates. Cleaves cruciform DNA by making single-stranded nicks across the HJ at symmetrical positions within the homologous arms, yielding a 5'-phosphate and a 3'-hydroxyl group; requires a central core of homology in the junction. The consensus cleavage sequence is 5'-(A/T)TT(C/G)-3'. Cleavage occurs on the 3'-side of the TT dinucleotide at the point of strand exchange. HJ branch migration catalyzed by RuvA-RuvB allows RuvC to scan DNA until it finds its consensus sequence, where it cleaves and resolves the cruciform DNA. In Paraburkholderia xenovorans (strain LB400), this protein is Crossover junction endodeoxyribonuclease RuvC.